The primary structure comprises 333 residues: Probable tRNA pseudouridine synthase B (333 aa).

Residue D66 is the Nucleophile of the active site. The 76-residue stretch at 233–308 (LKKIIIKDSA…EVVEITRVIM (76 aa)) folds into the PUA domain.

It belongs to the pseudouridine synthase TruB family. Type 2 subfamily.

It catalyses the reaction uridine(55) in tRNA = pseudouridine(55) in tRNA. In terms of biological role, could be responsible for synthesis of pseudouridine from uracil-55 in the psi GC loop of transfer RNAs. The protein is Probable tRNA pseudouridine synthase B of Methanococcus maripaludis (strain DSM 14266 / JCM 13030 / NBRC 101832 / S2 / LL).